A 265-amino-acid chain; its full sequence is uncharacterized protein (265 aa).

Residues 1-21 form a helical membrane-spanning segment; that stretch reads MAFNNSTIIIIIVIAFAFFLI. Asn-74 and Asn-142 each carry an N-linked (GlcNAc...) asparagine; by host glycan.

The protein localises to the host membrane. It localises to the virion. This is an uncharacterized protein from Acanthamoeba polyphaga mimivirus (APMV).